Reading from the N-terminus, the 206-residue chain is Large ribosomal subunit protein mL40 (206 aa).

The N-terminal 46 residues, 1–46, are a transit peptide targeting the mitochondrion; it reads MATAAMLCAARALRPRSWIPGTCQAQVRHTHQRASLLSFWELIPMR. The disordered stretch occupies residues 170 to 190; sequence PFEKEGPHYTPPVPNYQAPEG.

It belongs to the mitochondrion-specific ribosomal protein mL40 family. In terms of assembly, component of the mitochondrial ribosome large subunit (39S) which comprises a 16S rRNA and about 50 distinct proteins.

The protein resides in the mitochondrion. This Rattus norvegicus (Rat) protein is Large ribosomal subunit protein mL40 (Mrpl40).